A 507-amino-acid chain; its full sequence is ATP synthase subunit alpha, chloroplastic (507 aa).

Residue 170 to 177 (GDRQTGKT) participates in ATP binding.

Belongs to the ATPase alpha/beta chains family. F-type ATPases have 2 components, CF(1) - the catalytic core - and CF(0) - the membrane proton channel. CF(1) has five subunits: alpha(3), beta(3), gamma(1), delta(1), epsilon(1). CF(0) has four main subunits: a, b, b' and c.

Its subcellular location is the plastid. It localises to the chloroplast thylakoid membrane. It carries out the reaction ATP + H2O + 4 H(+)(in) = ADP + phosphate + 5 H(+)(out). Functionally, produces ATP from ADP in the presence of a proton gradient across the membrane. The alpha chain is a regulatory subunit. The polypeptide is ATP synthase subunit alpha, chloroplastic (Ranunculus macranthus (Large buttercup)).